Here is a 190-residue protein sequence, read N- to C-terminus: Small ribosomal subunit protein eS7B (190 aa).

An N-acetylserine modification is found at Ser-2. 2 positions are modified to phosphoserine: Ser-10 and Ser-31. Glycyl lysine isopeptide (Lys-Gly) (interchain with G-Cter in ubiquitin) cross-links involve residues Lys-83 and Lys-84.

The protein belongs to the eukaryotic ribosomal protein eS7 family. As to quaternary structure, component of the small ribosomal subunit (SSU). Mature yeast ribosomes consist of a small (40S) and a large (60S) subunit. The 40S small subunit contains 1 molecule of ribosomal RNA (18S rRNA) and 33 different proteins (encoded by 57 genes). The large 60S subunit contains 3 rRNA molecules (25S, 5.8S and 5S rRNA) and 46 different proteins (encoded by 81 genes). Interacts with snoRNA U3. uS11 interacts with MPP10. Component of the ribosomal small subunit (SSU) processome composed of at least 40 protein subunits and snoRNA U3. N-terminally acetylated by acetyltransferase NatA. Post-translationally, ubiquitinated at Lys-83 and Lys-84 in response to stalled ribosomes, leading to activation of the No-Go Decay (NGD) pathway: first monoubiquitinated by MOT2/NOT4, followed by formation by HEL2 of 'Lys-63'-linked polyubiquitin chains on monoubiquitin.

The protein resides in the cytoplasm. The protein localises to the nucleus. It is found in the nucleolus. Its function is as follows. Component of the ribosome, a large ribonucleoprotein complex responsible for the synthesis of proteins in the cell. The small ribosomal subunit (SSU) binds messenger RNAs (mRNAs) and translates the encoded message by selecting cognate aminoacyl-transfer RNA (tRNA) molecules. The large subunit (LSU) contains the ribosomal catalytic site termed the peptidyl transferase center (PTC), which catalyzes the formation of peptide bonds, thereby polymerizing the amino acids delivered by tRNAs into a polypeptide chain. The nascent polypeptides leave the ribosome through a tunnel in the LSU and interact with protein factors that function in enzymatic processing, targeting, and the membrane insertion of nascent chains at the exit of the ribosomal tunnel. eS7 is involved in nucleolar processing of pre-18S ribosomal RNA and ribosome assembly. The sequence is that of Small ribosomal subunit protein eS7B from Saccharomyces cerevisiae (strain ATCC 204508 / S288c) (Baker's yeast).